A 255-amino-acid chain; its full sequence is Post-GPI attachment to proteins factor 2 (255 aa).

6 consecutive transmembrane segments (helical) span residues 25 to 45, 80 to 100, 111 to 131, 143 to 163, 185 to 205, and 209 to 229; these read LAAL…SLLF, LAIF…LEYY, LGIL…CLSF, NAFV…YLLN, LFLV…RHNA, and AGVY…NMGF.

This sequence belongs to the PGAP2 family.

The protein localises to the golgi apparatus membrane. It localises to the endoplasmic reticulum membrane. In terms of biological role, involved in the lipid remodeling steps of GPI-anchor maturation. Required for stable expression of GPI-anchored proteins at the cell surface. This is Post-GPI attachment to proteins factor 2 from Drosophila pseudoobscura pseudoobscura (Fruit fly).